Reading from the N-terminus, the 98-residue chain is RNA-binding protein Hfq (98 aa).

The Sm domain occupies 11–71 (DVFLNHVRRS…ISTVMPATPV (61 aa)).

It belongs to the Hfq family. Homohexamer.

In terms of biological role, RNA chaperone that binds small regulatory RNA (sRNAs) and mRNAs to facilitate mRNA translational regulation in response to envelope stress, environmental stress and changes in metabolite concentrations. Also binds with high specificity to tRNAs. The polypeptide is RNA-binding protein Hfq (Gluconacetobacter diazotrophicus (strain ATCC 49037 / DSM 5601 / CCUG 37298 / CIP 103539 / LMG 7603 / PAl5)).